The primary structure comprises 328 residues: Sterol demethylase protein B (328 aa).

It belongs to the NAD(P)-dependent epimerase/dehydratase family.

The catalysed reaction is a 3beta-hydroxy-4alpha-methylsteroid-4beta-carboxylate + NAD(+) = a 4alpha-methyl-3-oxosteroid + CO2 + NADH. It carries out the reaction a 3beta-hydroxy-4alpha-methylsteroid-4beta-carboxylate + NADP(+) = a 4alpha-methyl-3-oxosteroid + CO2 + NADPH. It catalyses the reaction 4beta-carboxy-4alpha-methyl-5alpha-cholesta-8,24-dien-3beta-ol + NAD(+) = 3-dehydro-4alpha-methylzymosterol + CO2 + NADH. The enzyme catalyses 4beta-carboxy-4alpha-methyl-5alpha-cholesta-8,24-dien-3beta-ol + NADP(+) = 3-dehydro-4alpha-methylzymosterol + CO2 + NADPH. The catalysed reaction is 3-dehydro-4alpha-methylzymosterol + NADPH + H(+) = 4alpha-methylzymosterol + NADP(+). Its pathway is steroid biosynthesis; sterol biosynthesis. Functionally, participates in the biosynthesis of bacterial sterols. Together with SdmA, removes one methyl group from the C-4 position of 4,4-dimethylated steroid molecules. SdmB catalyzes an oxidative decarboxylation that results in reduction of the 3beta-hydroxy group at the C-3 carbon to an oxo group. It also functions as a ketoreductase that converts the C-3 oxo group back to a hydroxyl group after C-4 demethylation. The protein is Sterol demethylase protein B of Methylococcus capsulatus (strain ATCC 33009 / NCIMB 11132 / Bath).